The sequence spans 109 residues: Tyrosine-protein phosphatase 6 (109 aa).

Positions 1 to 109 (YNINVIVMVC…SEDETTPLCV (109 aa)) constitute a Tyrosine-protein phosphatase domain. D76 contacts substrate.

The protein belongs to the protein-tyrosine phosphatase family.

It carries out the reaction O-phospho-L-tyrosyl-[protein] + H2O = L-tyrosyl-[protein] + phosphate. The protein is Tyrosine-protein phosphatase 6 (STY-6) of Styela plicata (Wrinkled sea squirt).